Consider the following 504-residue polypeptide: Ribosomal protein uS12 methylthiotransferase RimO (504 aa).

The region spanning 19–135 (KKVGFVSLGC…ILAASGIEPR (117 aa)) is the MTTase N-terminal domain. Positions 28, 64, 98, 214, 218, and 221 each coordinate [4Fe-4S] cluster. Positions 200 to 430 (ATPKYMAYIK…MSLQKQISKK (231 aa)) constitute a Radical SAM core domain. In terms of domain architecture, TRAM spans 433–504 (KALIGREFDV…HDYDLVARLL (72 aa)).

The protein belongs to the methylthiotransferase family. RimO subfamily. [4Fe-4S] cluster is required as a cofactor.

The protein localises to the cytoplasm. It catalyses the reaction L-aspartate(89)-[ribosomal protein uS12]-hydrogen + (sulfur carrier)-SH + AH2 + 2 S-adenosyl-L-methionine = 3-methylsulfanyl-L-aspartate(89)-[ribosomal protein uS12]-hydrogen + (sulfur carrier)-H + 5'-deoxyadenosine + L-methionine + A + S-adenosyl-L-homocysteine + 2 H(+). In terms of biological role, catalyzes the methylthiolation of an aspartic acid residue of ribosomal protein uS12. The polypeptide is Ribosomal protein uS12 methylthiotransferase RimO (Koribacter versatilis (strain Ellin345)).